Reading from the N-terminus, the 492-residue chain is Probable cobyric acid synthase (492 aa).

A GATase cobBQ-type domain is found at 248–434 (PVRIAVVRLP…MHGLFQNPGA (187 aa)). The Nucleophile role is filled by Cys327. His426 is an active-site residue.

Belongs to the CobB/CobQ family. CobQ subfamily.

It participates in cofactor biosynthesis; adenosylcobalamin biosynthesis. Functionally, catalyzes amidations at positions B, D, E, and G on adenosylcobyrinic A,C-diamide. NH(2) groups are provided by glutamine, and one molecule of ATP is hydrogenolyzed for each amidation. This Methanoculleus marisnigri (strain ATCC 35101 / DSM 1498 / JR1) protein is Probable cobyric acid synthase.